The primary structure comprises 440 residues: 5-hydroxytryptamine receptor 6 (440 aa).

Topologically, residues 1–27 are extracellular; it reads MVPEPGPSANSTPAWGAGPPSAPGGSG. A helical transmembrane segment spans residues 28-52; the sequence is WVAAALCVVIALTAAANSLLIALIC. The Cytoplasmic portion of the chain corresponds to 53 to 62; sequence TQPALRNTSN. A helical membrane pass occupies residues 63–88; the sequence is FFLVSLFTSDLMVGLVVMPPAMLNAL. Residues 89 to 96 are Extracellular-facing; that stretch reads YGRWVLAR. Residues 97 to 122 form a helical membrane-spanning segment; sequence GLCLLWTAFDVMCCSASILNLCLISL. C99 and C180 are joined by a disulfide. D106 provides a ligand contact to serotonin. At 123–142 the chain is on the cytoplasmic side; it reads DRYLLILSPLRYKLRMTPPR. Residues 143 to 167 form a helical membrane-spanning segment; the sequence is ALALVLGAWSLAALASFLPLLLGWH. The Extracellular portion of the chain corresponds to 168–185; that stretch reads ELGHARPPVPGQCRLLAS. The helical transmembrane segment at 186–209 threads the bilayer; it reads LPFVLVASGLTFFLPSGAICFTYC. The Cytoplasmic segment spans residues 210 to 266; it reads RILLAARKQAVQVASLTTGMASQASETLQVPRTPRPGVESADSRRLATKHSRKALKA. The chain crosses the membrane as a helical span at residues 267–293; it reads SLTLGILLGMFFVTWLPFFVANIVQAV. N288 is a serotonin binding site. The Extracellular portion of the chain corresponds to 294-299; the sequence is CDCISP. Residues 300 to 323 traverse the membrane as a helical segment; that stretch reads GLFDVLTWLGYCNSTMNPIIYPLF. At 324–440 the chain is on the cytoplasmic side; it reads MRDFKRALGR…RPHPLGIPTN (117 aa). The segment at 346-392 is disordered; sequence ASLASPSLRTSHSGPRPGLSLQQVLPLPLPPDSDSDSDAGSGGSSGL. Positions 347-358 are enriched in polar residues; it reads SLASPSLRTSHS. Residues 362–371 are compositionally biased toward low complexity; the sequence is PGLSLQQVLP.

Belongs to the G-protein coupled receptor 1 family. Interacts with MTOR, RPTOR and NF1. Interacts with CDK5.

Its subcellular location is the cell membrane. Its function is as follows. G-protein coupled receptor for 5-hydroxytryptamine (serotonin), a biogenic hormone that functions as a neurotransmitter, a hormone and a mitogen. Also has a high affinity for tricyclic psychotropic drugs. Ligand binding causes a conformation change that triggers signaling via guanine nucleotide-binding proteins (G proteins) and modulates the activity of downstream effectors. HTR6 is coupled to G(s) G alpha proteins and mediates activation of adenylate cyclase activity. Controls pyramidal neurons migration during corticogenesis, through the regulation of CDK5 activity. Is an activator of mTOR signaling. This is 5-hydroxytryptamine receptor 6 (HTR6) from Pan troglodytes (Chimpanzee).